The sequence spans 284 residues: MLYSRESRTTVLFLALVTSLTVLCHSVDVTTVFTTSTITEITTVTAAPQPQNKAETALNTATNIIQTMQFLFNCAPFKWKGPLKITSCALNFIVLLLTAWGYLLKYLQENKLNSDADMEKMVGLGFGEMVGRIFGKGVGKAFTKMDITQKLVYPFEGSNRQKCLLMTVGENSIVPFHDLFTEICFDQYTLDSLSHHNHGSISILDAGSVSALGFADISSKMPSVSELYTLFGDYTIEVLGGITKLASTLNREDWQGERNGFAVLSRDRPNQTLLSVHMYSSSLL.

The signal sequence occupies residues 1-24; sequence MLYSRESRTTVLFLALVTSLTVLC. At 25–84 the chain is on the cytoplasmic side; the sequence is HSVDVTTVFTTSTITEITTVTAAPQPQNKAETALNTATNIIQTMQFLFNCAPFKWKGPLK. A helical membrane pass occupies residues 85–104; that stretch reads ITSCALNFIVLLLTAWGYLL. Topologically, residues 105–284 are extracellular; sequence KYLQENKLNS…SVHMYSSSLL (180 aa). The N-linked (GlcNAc...) asparagine glycan is linked to Asn270.

It to yeast YNL019c.

It localises to the cell membrane. This is an uncharacterized protein from Saccharomyces cerevisiae (strain ATCC 204508 / S288c) (Baker's yeast).